Here is a 1382-residue protein sequence, read N- to C-terminus: Y' element ATP-dependent helicase protein 1 copy 4 (1382 aa).

Positions 383–560 (EIYMADTPSV…LQRIGLTGLA (178 aa)) constitute a Helicase ATP-binding domain. Position 396 to 403 (396 to 403 (APPGYGKT)) interacts with ATP. A Helicase C-terminal domain is found at 617 to 766 (KLLLALFEIE…EFYGLESKKG (150 aa)). Disordered stretches follow at residues 840–864 (ANAS…NVRT) and 880–1007 (TTES…DINK). Over residues 880 to 983 (TTESTNSSTN…ATTTESTNAS (104 aa)) the composition is skewed to low complexity. The segment covering 984-1007 (AKEDANKDGNAEDNRFHPVTDINK) has biased composition (basic and acidic residues).

Belongs to the helicase family. Yeast subtelomeric Y' repeat subfamily.

Its function is as follows. Catalyzes DNA unwinding and is involved in telomerase-independent telomere maintenance. This is Y' element ATP-dependent helicase protein 1 copy 4 (YRF1-4) from Saccharomyces cerevisiae (strain ATCC 204508 / S288c) (Baker's yeast).